Here is a 1124-residue protein sequence, read N- to C-terminus: Tyrosine-protein kinase JAK3 (1124 aa).

The interaction with cytokine/interferon/growth hormone receptors stretch occupies residues 1–223; the sequence is MAPPSEETPL…RRTVRRALRR (223 aa). Position 17 is a phosphoserine (Ser-17). In terms of domain architecture, FERM spans 24–356; that stretch reads GALHVLLPAR…GYFRLTTDSQ (333 aa). The region spanning 375–475 is the SH2; atypical domain; that stretch reads QCHGPITLDF…GVAVTLTSCC (101 aa). Positions 521–781 constitute a Protein kinase 1 domain; sequence LEWHENLGHG…AVIRDLNSLI (261 aa). Phosphotyrosine; by autocatalysis is present on Tyr-785. One can recognise a Protein kinase 2 domain in the interval 822 to 1111; that stretch reads LKYISQLGKG…SRGCETHAFT (290 aa). ATP-binding positions include 828-836 and Lys-855; that span reads LGKGNFGSV. Tyr-904 and Tyr-939 each carry phosphotyrosine. Asp-949 (proton acceptor) is an active-site residue. Residues Tyr-980 and Tyr-981 each carry the phosphotyrosine; by autocatalysis modification.

The protein belongs to the protein kinase superfamily. Tyr protein kinase family. JAK subfamily. As to quaternary structure, interacts with STAM2 and MYO18A. Interacts with SHB. Interacts with CD69. In terms of processing, tyrosine phosphorylated in response to IL-2 and IL-4. Dephosphorylation of Tyr-980 and Tyr-981 by PTPN2 negatively regulates cytokine-mediated signaling. In terms of tissue distribution, in NK cells and an NK-like cell line but not in resting T-cells or in other tissues. The S-form is more commonly seen in hematopoietic lines, whereas the B-form is detected in cells both of hematopoietic and epithelial origins.

The protein resides in the endomembrane system. Its subcellular location is the cytoplasm. It carries out the reaction L-tyrosyl-[protein] + ATP = O-phospho-L-tyrosyl-[protein] + ADP + H(+). Non-receptor tyrosine kinase involved in various processes such as cell growth, development, or differentiation. Mediates essential signaling events in both innate and adaptive immunity and plays a crucial role in hematopoiesis during T-cells development. In the cytoplasm, plays a pivotal role in signal transduction via its association with type I receptors sharing the common subunit gamma such as IL2R, IL4R, IL7R, IL9R, IL15R and IL21R. Following ligand binding to cell surface receptors, phosphorylates specific tyrosine residues on the cytoplasmic tails of the receptor, creating docking sites for STATs proteins. Subsequently, phosphorylates the STATs proteins once they are recruited to the receptor. Phosphorylated STATs then form homodimer or heterodimers and translocate to the nucleus to activate gene transcription. For example, upon IL2R activation by IL2, JAK1 and JAK3 molecules bind to IL2R beta (IL2RB) and gamma chain (IL2RG) subunits inducing the tyrosine phosphorylation of both receptor subunits on their cytoplasmic domain. Then, STAT5A and STAT5B are recruited, phosphorylated and activated by JAK1 and JAK3. Once activated, dimerized STAT5 translocates to the nucleus and promotes the transcription of specific target genes in a cytokine-specific fashion. This is Tyrosine-protein kinase JAK3 from Homo sapiens (Human).